A 3096-amino-acid polypeptide reads, in one-letter code: Cilia- and flagella-associated protein 54 (3096 aa).

Residues 1 to 45 (MAAQGSPSSSPSDDSTTSGSLPELPPTSTATSRSPPESKGSSRSS) show a composition bias toward low complexity. Disordered stretches follow at residues 1–46 (MAAQ…RSSL) and 1248–1267 (SNEQ…LKTK).

Belongs to the CFAP54 family.

The protein resides in the cytoplasm. It localises to the cytoskeleton. It is found in the cilium axoneme. Functionally, required for assembly and function of cilia and flagella. The sequence is that of Cilia- and flagella-associated protein 54 from Homo sapiens (Human).